Consider the following 453-residue polypeptide: Midnolin-A (453 aa).

The 75-residue stretch at 20-94 (MNLNIQSTTG…LTLLPSVEAG (75 aa)) folds into the Ubiquitin-like domain. Disordered regions lie at residues 184 to 219 (SHLA…TTSV), 232 to 256 (CAEQ…RSRK), 333 to 376 (RNAK…ENRA), and 390 to 429 (QKRL…EGSL). Positions 206-219 (HCNGPHSSPLTTSV) are enriched in polar residues. 2 stretches are compositionally biased toward low complexity: residues 239 to 252 (STRG…SPSS) and 338 to 351 (TSPQ…TTHP). Residues 365–376 (SGDRLRQTENRA) are compositionally biased toward basic and acidic residues. Over residues 390-399 (QKRLRRKARR) the composition is skewed to basic residues. Residues 415–428 (RTSSNSSTSSGEGS) show a composition bias toward low complexity.

The protein resides in the nucleus. Its subcellular location is the cytoplasm. It is found in the cytosol. The protein localises to the nucleolus. Facilitates ubiquitin-independent proteasomal degradation of polycomb protein CBX4. Plays a role in inhibiting the activity of glucokinase GCK and both glucose-induced and basal insulin secretion. In Xenopus laevis (African clawed frog), this protein is Midnolin-A (midn-a).